Consider the following 291-residue polypeptide: Undecaprenyl-diphosphatase (291 aa).

8 helical membrane-spanning segments follow: residues 1 to 21 (MFII…LTEF), 48 to 68 (SAFT…AWVF), 102 to 122 (LHVL…DDFI), 126 to 146 (LFSV…MIIA), 162 to 182 (INYF…WPGF), 203 to 223 (SDFT…LSLL), 231 to 251 (IADI…GLIA), and 267 to 287 (FAIY…GFGI).

Belongs to the UppP family.

It localises to the cell membrane. The catalysed reaction is di-trans,octa-cis-undecaprenyl diphosphate + H2O = di-trans,octa-cis-undecaprenyl phosphate + phosphate + H(+). Its function is as follows. Catalyzes the dephosphorylation of undecaprenyl diphosphate (UPP). Confers resistance to bacitracin. This is Undecaprenyl-diphosphatase from Staphylococcus aureus (strain bovine RF122 / ET3-1).